A 249-amino-acid chain; its full sequence is Triosephosphate isomerase (249 aa).

9–11 provides a ligand contact to substrate; the sequence is NWK. His95 functions as the Electrophile in the catalytic mechanism. Catalysis depends on Glu167, which acts as the Proton acceptor. Substrate contacts are provided by residues Gly173, Ser213, and 234 to 235; that span reads GG.

The protein belongs to the triosephosphate isomerase family. Homodimer.

The protein localises to the cytoplasm. The catalysed reaction is D-glyceraldehyde 3-phosphate = dihydroxyacetone phosphate. The protein operates within carbohydrate biosynthesis; gluconeogenesis. It functions in the pathway carbohydrate degradation; glycolysis; D-glyceraldehyde 3-phosphate from glycerone phosphate: step 1/1. In terms of biological role, involved in the gluconeogenesis. Catalyzes stereospecifically the conversion of dihydroxyacetone phosphate (DHAP) to D-glyceraldehyde-3-phosphate (G3P). This is Triosephosphate isomerase from Dictyoglomus thermophilum (strain ATCC 35947 / DSM 3960 / H-6-12).